A 370-amino-acid polypeptide reads, in one-letter code: Protein SHI RELATED SEQUENCE 1 (370 aa).

Residues 1–37 (MAGFFSLDGGGGGGGGGGNNQEDHRSNTNPPPPVSEA) are disordered. A compositionally biased stretch (gly residues) spans 8–19 (DGGGGGGGGGGN). Zn(2+) contacts are provided by C144, C147, C155, C160, C164, and C171. Positions 144–171 (CQDCGNQAKKDCSHMRCRTCCKSRGFEC) form a DNA-binding region, zn(2)-C6 fungal-type; degenerate. Residues 271-274 (IGGH) carry the Required for homo- and heterodimerization motif.

The protein belongs to the SHI protein family. Forms homodimers and heterodimers with LRP1. In terms of tissue distribution, expressed in flowers, seeds and seedlings.

The protein localises to the nucleus. Its function is as follows. Transcription activator that binds DNA on 5'-ACTCTAC-3' and promotes auxin homeostasis-regulating gene expression (e.g. YUC genes), as well as genes affecting stamen development, cell expansion and timing of flowering. Synergistically with other SHI-related proteins, regulates gynoecium, stamen and leaf development in a dose-dependent manner, controlling apical-basal patterning. Promotes style and stigma formation, and influences vascular development during gynoecium development. May also have a role in the formation and/or maintenance of the shoot apical meristem (SAM). This chain is Protein SHI RELATED SEQUENCE 1 (SRS1), found in Arabidopsis thaliana (Mouse-ear cress).